The primary structure comprises 71 residues: Small ribosomal subunit protein eS17 (71 aa).

Belongs to the eukaryotic ribosomal protein eS17 family.

This is Small ribosomal subunit protein eS17 from Pyrobaculum neutrophilum (strain DSM 2338 / JCM 9278 / NBRC 100436 / V24Sta) (Thermoproteus neutrophilus).